We begin with the raw amino-acid sequence, 959 residues long: DNA translocase FtsK 1 (959 aa).

The next 3 helical transmembrane spans lie at 1-21 (MGLGWFGISSVWLLPMVWRYV), 39-59 (IWLATLAVLCASASLEALTSG), and 83-103 (GWTGAFLLMLGVLLWVAPMVF). The Cytoplasmic segment spans residues 104–959 (GHSWRQLLAR…REVIAPGGGD (856 aa)). Residues 122–427 (PVQADARHDE…AAPPPPAVPA (306 aa)) are disordered. Residues 126–136 (DARHDEADDGL) show a composition bias toward basic and acidic residues. 2 stretches are compositionally biased toward low complexity: residues 220–229 (ATPKAATQAP) and 264–286 (APSAPVEDAAPAISPAAEPDAPA). The segment covering 287-298 (SAPPEPAEPSPP) has biased composition (pro residues). Positions 333–379 (PEPEPEPEAETEVTPEAEAEPEAEPEAEAEPEAEAEAEAEAEAEPEA) are enriched in acidic residues. The span at 380–403 (EAPAPESVAPALQEAEAATAAEAP) shows a compositional bias: low complexity. In terms of domain architecture, FtsK spans 605–814 (GNPVVTDLAR…FQVSSKIDSR (210 aa)). Residue 625-630 (GSGKSV) coordinates ATP.

This sequence belongs to the FtsK/SpoIIIE/SftA family. As to quaternary structure, homohexamer. Forms a ring that surrounds DNA.

Its subcellular location is the cell inner membrane. Functionally, essential cell division protein that coordinates cell division and chromosome segregation. The N-terminus is involved in assembly of the cell-division machinery. The C-terminus functions as a DNA motor that moves dsDNA in an ATP-dependent manner towards the dif recombination site, which is located within the replication terminus region. Translocation stops specifically at Xer-dif sites, where FtsK interacts with the Xer recombinase, allowing activation of chromosome unlinking by recombination. FtsK orienting polar sequences (KOPS) guide the direction of DNA translocation. FtsK can remove proteins from DNA as it translocates, but translocation stops specifically at XerCD-dif site, thereby preventing removal of XerC and XerD from dif. The protein is DNA translocase FtsK 1 (ftsK1) of Ralstonia nicotianae (strain ATCC BAA-1114 / GMI1000) (Ralstonia solanacearum).